Here is a 77-residue protein sequence, read N- to C-terminus: Conotoxin PnMEKL-04 (77 aa).

The first 19 residues, 1-19 (MEKLTILLLVAAVLMSTQA), serve as a signal peptide directing secretion. The propeptide occupies 20–45 (LPQGGGENRLKENIKFLLKRKTAADR). Cystine bridges form between cysteine 51–cysteine 65, cysteine 58–cysteine 69, and cysteine 64–cysteine 73.

The protein belongs to the conotoxin O2 superfamily. As to expression, expressed by the venom duct.

Its subcellular location is the secreted. This Conus pennaceus (Feathered cone) protein is Conotoxin PnMEKL-04.